Consider the following 132-residue polypeptide: Small ribosomal subunit protein uS11 (132 aa).

It belongs to the universal ribosomal protein uS11 family. As to quaternary structure, part of the 30S ribosomal subunit.

Its function is as follows. Located on the platform of the 30S subunit. This chain is Small ribosomal subunit protein uS11, found in Sulfolobus acidocaldarius (strain ATCC 33909 / DSM 639 / JCM 8929 / NBRC 15157 / NCIMB 11770).